A 309-amino-acid polypeptide reads, in one-letter code: UPF0276 protein RB0508 (309 aa).

The protein belongs to the UPF0276 family.

The protein is UPF0276 protein RB0508 of Rhizobium meliloti (strain 1021) (Ensifer meliloti).